Reading from the N-terminus, the 226-residue chain is HTH-type transcriptional regulator Rv0324 (226 aa).

Positions 7–101 (RKAALLDQVA…LVQVVADEHL (95 aa)) constitute an HTH arsR-type domain. A DNA-binding region (H-T-H motif) is located at residues 41–64 (VEAIATATGMNLTTASANLQALKS). Residues 129 to 218 (EAGEVTLVDV…WRLAGLPVDE (90 aa)) form the Rhodanese domain. The active-site Cysteine persulfide intermediate is Cys-177.

In terms of biological role, part of a regulatory network that coordinates tolerance to the antitubercular drug bedaquiline. The sequence is that of HTH-type transcriptional regulator Rv0324 from Mycobacterium tuberculosis (strain ATCC 25618 / H37Rv).